A 516-amino-acid polypeptide reads, in one-letter code: RNA-binding region-containing protein 3 (516 aa).

4 disordered regions span residues Met1–Arg27, Val106–Glu130, Glu210–Arg254, and Ala264–Arg283. Position 21 is a phosphoserine (Ser21). The RRM 1 domain maps to Arg27 to Glu102. Ser108 is subject to Phosphoserine. A compositionally biased stretch (basic and acidic residues) spans Thr115–Glu130. Positions Ala217–Pro230 are enriched in pro residues. Residues Lys269–Arg283 show a composition bias toward basic residues. The region spanning Cys419–Ser502 is the RRM 2 domain.

In terms of assembly, component of the U11/U12 snRNPs that are part of the U12-type spliceosome. Found in a complex with m(7)G-capped U12 snRNA. Interacts with PDCD7.

It localises to the nucleus. Its function is as follows. Participates in pre-mRNA U12-dependent splicing, performed by the minor spliceosome which removes U12-type introns. U12-type introns comprises less than 1% of all non-coding sequences. Binds to the 3'-stem-loop of m(7)G-capped U12 snRNA. The chain is RNA-binding region-containing protein 3 (RNPC3) from Bos taurus (Bovine).